Here is a 453-residue protein sequence, read N- to C-terminus: tRNA modification GTPase MnmE (453 aa).

The (6S)-5-formyl-5,6,7,8-tetrahydrofolate site is built by Arg22, Glu79, and Lys119. The region spanning 215 to 376 is the TrmE-type G domain; that stretch reads GMKVVIAGRP…LREHLKACMG (162 aa). A K(+)-binding site is contributed by Asn225. Residues 225–230, 244–250, 269–272, and 334–337 each bind GTP; these read NAGKSS, TEIAGTT, DTAG, and NKAD. Ser229 provides a ligand contact to Mg(2+). K(+)-binding residues include Thr244, Ile246, and Thr249. Thr250 contacts Mg(2+). Lys453 provides a ligand contact to (6S)-5-formyl-5,6,7,8-tetrahydrofolate.

The protein belongs to the TRAFAC class TrmE-Era-EngA-EngB-Septin-like GTPase superfamily. TrmE GTPase family. As to quaternary structure, homodimer. Heterotetramer of two MnmE and two MnmG subunits. It depends on K(+) as a cofactor.

Its subcellular location is the cytoplasm. Exhibits a very high intrinsic GTPase hydrolysis rate. Involved in the addition of a carboxymethylaminomethyl (cmnm) group at the wobble position (U34) of certain tRNAs, forming tRNA-cmnm(5)s(2)U34. The chain is tRNA modification GTPase MnmE from Aeromonas salmonicida (strain A449).